We begin with the raw amino-acid sequence, 372 residues long: Cytochrome b (372 aa).

A run of 4 helical transmembrane segments spans residues 25–45, 69–90, 105–125, and 170–190; these read FGSM…FLAI, WIMQ…YIHI, WLSG…GYVL, and FFAL…IHII. Heme b is bound by residues His-75 and His-89. Heme b contacts are provided by His-174 and His-188. A ubiquinone is bound at residue His-193. 4 helical membrane passes run 218 to 238, 280 to 300, 312 to 332, and 339 to 358; these read YKDM…LSFS, LGGT…PFTH, LSQI…WTAT, and FISI…IMNP.

This sequence belongs to the cytochrome b family. As to quaternary structure, the cytochrome bc1 complex contains 3 respiratory subunits (MT-CYB, CYC1 and UQCRFS1), 2 core proteins (UQCRC1 and UQCRC2) and probably 6 low-molecular weight proteins. Requires heme b as cofactor.

The protein resides in the mitochondrion inner membrane. Component of the ubiquinol-cytochrome c reductase complex (complex III or cytochrome b-c1 complex) that is part of the mitochondrial respiratory chain. The b-c1 complex mediates electron transfer from ubiquinol to cytochrome c. Contributes to the generation of a proton gradient across the mitochondrial membrane that is then used for ATP synthesis. The sequence is that of Cytochrome b (MT-CYB) from Walterinnesia aegyptia (Desert black snake).